We begin with the raw amino-acid sequence, 579 residues long: Protein PLASTID MOVEMENT IMPAIRED 15 (579 aa).

Coiled-coil stretches lie at residues 90–161 (EVLK…NEEH), 188–216 (KVLD…IEIE), 383–419 (QKTK…KLES), and 481–501 (LMKT…EERE).

It belongs to the WEB family.

Its function is as follows. Required for the chloroplast avoidance response under high intensity blue light. This avoidance response consists in the relocation of chloroplasts on the anticlinal side of exposed cells. The chain is Protein PLASTID MOVEMENT IMPAIRED 15 (PMI15) from Arabidopsis thaliana (Mouse-ear cress).